Consider the following 277-residue polypeptide: Insulin-induced gene 1 protein (277 aa).

Topologically, residues 1-84 (MPRLHDHFWS…PYPNTWHHRL (84 aa)) are cytoplasmic. The span at 51–66 (HGAPDADPAPRGRSAA) shows a compositional bias: low complexity. Residues 51–73 (HGAPDADPAPRGRSAAMSGPEPG) are disordered. A helical transmembrane segment spans residues 85–107 (LQRSLVLFSVGVVLALVLNLLQI). Residues 108–126 (QRNVTLFPEEVIATIFSSA) are Lumenal-facing. Residues 127-144 (WWVPPCCGTAAAVVGLLY) traverse the membrane as a helical segment. Residues 145–159 (PCIDSHLGEPHKFKR) lie on the Cytoplasmic side of the membrane. Glycyl lysine isopeptide (Lys-Gly) (interchain with G-Cter in ubiquitin) cross-links involve residues lysine 156 and lysine 158. The chain crosses the membrane as a helical span at residues 160–182 (EWASVMRCIAVFVGINHASAKLD). At 183–185 (FAN) the chain is on the lumenal side. A helical membrane pass occupies residues 186–204 (NVQLSLTLAALSLGLWWTF). Topologically, residues 205–209 (DRSRS) are cytoplasmic. At serine 207 the chain carries Phosphoserine; by PCK1. A helical membrane pass occupies residues 210 to 231 (GLGLGITIAFLATLITQFLVYN). Over 232-245 (GVYQYTSPDFLYIR) the chain is Lumenal. Residues 246-263 (SWLPCIFFSGGVTVGNIG) traverse the membrane as a helical segment. Topologically, residues 264 to 277 (RQLAMGVPEKPHSD) are cytoplasmic. The KxHxx signature appears at 271–277 (PEKPHSD).

It belongs to the INSIG family. In terms of assembly, interacts with SCAP; interaction is direct and only takes place in the presence of sterols; it prevents interaction between SCAP and the coat protein complex II (COPII). Associates with the SCAP-SREBP complex (composed of SCAP and SREBF1/SREBP1 or SREBF2/SREBP2); association is mediated via its interaction with SCAP and only takes place in the presence of sterols. Interaction with SCAP is mutually exclusive with PAQR3. Interacts with HMGCR (via its SSD); the interaction, accelerated by sterols, leads to the recruitment of HMGCR to AMFR/gp78 for its ubiquitination by the sterol-mediated ERAD pathway. Interacts with AMFR/gp78 (via its membrane domain); the interaction recruits HMCR at the ER membrane for its ubiquitination and degradation by the sterol-mediated ERAD pathway. Interacts with SOAT2/ACAT2; leading to promote recruitment of AMFR/gp78 and subsequent ubiquitination of SOAT2/ACAT2. Interacts with RNF139. Interacts with RNF145. Phosphorylation at Ser-207 by PCK1 reduces binding to oxysterol, disrupting the interaction between INSIG1 and SCAP, thereby promoting nuclear translocation of SREBP proteins (SREBF1/SREBP1 or SREBF2/SREBP2) and subsequent transcription of downstream lipogenesis-related genes. Post-translationally, ubiquitinated by AMFR/gp78 in response to sterol deprivation, leading to its degradation: when the SCAP-SREBP complex becomes dissociated from INSIG1, INSIG1 is then ubiquitinated and degraded in proteasomes. Although ubiquitination is required for rapid INSIG1 degradation, it is not required for release of the SCAP-SREBP complex. Ubiquitinated by RNF139. As to expression, expressed in all tissues tested with highest expression in the liver.

The protein resides in the endoplasmic reticulum membrane. In terms of biological role, oxysterol-binding protein that mediates feedback control of cholesterol synthesis by controlling both endoplasmic reticulum to Golgi transport of SCAP and degradation of HMGCR. Acts as a negative regulator of cholesterol biosynthesis by mediating the retention of the SCAP-SREBP complex in the endoplasmic reticulum, thereby blocking the processing of sterol regulatory element-binding proteins (SREBPs) SREBF1/SREBP1 and SREBF2/SREBP2. Binds oxysterol, including 25-hydroxycholesterol, regulating interaction with SCAP and retention of the SCAP-SREBP complex in the endoplasmic reticulum. In presence of oxysterol, interacts with SCAP, retaining the SCAP-SREBP complex in the endoplasmic reticulum, thereby preventing SCAP from escorting SREBF1/SREBP1 and SREBF2/SREBP2 to the Golgi. Sterol deprivation or phosphorylation by PCK1 reduce oxysterol-binding, disrupting the interaction between INSIG1 and SCAP, thereby promoting Golgi transport of the SCAP-SREBP complex, followed by processing and nuclear translocation of SREBF1/SREBP1 and SREBF2/SREBP2. Also regulates cholesterol synthesis by regulating degradation of HMGCR: initiates the sterol-mediated ubiquitin-mediated endoplasmic reticulum-associated degradation (ERAD) of HMGCR via recruitment of the reductase to the ubiquitin ligases AMFR/gp78 and/or RNF139. Also regulates degradation of SOAT2/ACAT2 when the lipid levels are low: initiates the ubiquitin-mediated degradation of SOAT2/ACAT2 via recruitment of the ubiquitin ligases AMFR/gp78. The protein is Insulin-induced gene 1 protein of Homo sapiens (Human).